The sequence spans 302 residues: Ribosomal protein L11 methyltransferase (302 aa).

Residues T148, G169, D191, and N237 each contribute to the S-adenosyl-L-methionine site.

The protein belongs to the methyltransferase superfamily. PrmA family.

The protein localises to the cytoplasm. It carries out the reaction L-lysyl-[protein] + 3 S-adenosyl-L-methionine = N(6),N(6),N(6)-trimethyl-L-lysyl-[protein] + 3 S-adenosyl-L-homocysteine + 3 H(+). Methylates ribosomal protein L11. This Desulfosudis oleivorans (strain DSM 6200 / JCM 39069 / Hxd3) (Desulfococcus oleovorans) protein is Ribosomal protein L11 methyltransferase.